A 400-amino-acid polypeptide reads, in one-letter code: TBC1 domain family member 13 (400 aa).

The Rab-GAP TBC domain occupies 35–345 (PCEGGLRCLC…RIWDSLFADD (311 aa)).

Interacts with RAB1A and RAB10; in a GTP-dependent manner.

The protein localises to the membrane. It is found in the cytoplasm. Functionally, acts as a GTPase-activating protein for RAB35. Together with RAB35 may be involved in regulation of insulin-induced glucose transporter SLC2A4/GLUT4 translocation to the plasma membrane in adipocytes. This Homo sapiens (Human) protein is TBC1 domain family member 13 (TBC1D13).